Reading from the N-terminus, the 256-residue chain is Transcription factor bHLH131 (256 aa).

A bHLH domain is found at 91–140 (VAAKKHSDAERRRRLRINSQFATLRTILPNLVKQDKASVLGETVRYFNEL).

Homodimer.

The protein localises to the nucleus. The chain is Transcription factor bHLH131 (BHLH131) from Arabidopsis thaliana (Mouse-ear cress).